Here is a 699-residue protein sequence, read N- to C-terminus: Elongation factor G (699 aa).

Residues 8–283 (EHIRNIGICA…AVVDFLPSPI (276 aa)) enclose the tr-type G domain. GTP is bound by residues 17–24 (AHIDAGKT), 81–85 (DTPGH), and 135–138 (NKMD).

It belongs to the TRAFAC class translation factor GTPase superfamily. Classic translation factor GTPase family. EF-G/EF-2 subfamily.

Its subcellular location is the cytoplasm. Its function is as follows. Catalyzes the GTP-dependent ribosomal translocation step during translation elongation. During this step, the ribosome changes from the pre-translocational (PRE) to the post-translocational (POST) state as the newly formed A-site-bound peptidyl-tRNA and P-site-bound deacylated tRNA move to the P and E sites, respectively. Catalyzes the coordinated movement of the two tRNA molecules, the mRNA and conformational changes in the ribosome. The chain is Elongation factor G from Rickettsia conorii (strain ATCC VR-613 / Malish 7).